The sequence spans 257 residues: MVLIRVIANLLILQVSYAQKSSELVVGGDECDINEHPFLAFLYSHGYFCGLTLINQEWVLTAAHCDRRFMRIYLGIHARSVANDDEVIRYPKEKFICPNKNMSDEKDKDIMLIRLNRPVKNSTHIAPISLPSNPPSVGSVCRVMGWGSITIPNDTYPDVPHCANINLVNDTVCRGAYKRFPAKSRTLCAGVLQGGKDTCVGDSGGPLICNGTFQGIVSWGGKVCARPRKPALYTKVFDYLPWIQSIIAGNKTATCPP.

An N-terminal signal peptide occupies residues 1–18 (MVLIRVIANLLILQVSYA). The propeptide occupies 19 to 24 (QKSSEL). Positions 25–248 (VVGGDECDIN…YLPWIQSIIA (224 aa)) constitute a Peptidase S1 domain. Cystine bridges form between Cys31–Cys162, Cys49–Cys65, Cys97–Cys255, Cys141–Cys209, Cys173–Cys188, and Cys199–Cys224. The Charge relay system role is filled by His64. The N-linked (GlcNAc...) asparagine glycan is linked to Asn101. Asp109 acts as the Charge relay system in catalysis. N-linked (GlcNAc...) asparagine glycans are attached at residues Asn121, Asn153, and Asn169. The Charge relay system role is filled by Ser203. N-linked (GlcNAc...) asparagine glycosylation is found at Asn210 and Asn250.

The protein belongs to the peptidase S1 family. Snake venom subfamily. In terms of assembly, monomer. As to expression, expressed by the venom gland.

Its subcellular location is the secreted. Snake venom serine protease that may act in the hemostasis system of the prey. This is Snake venom serine protease BITS01A from Bothrops insularis (Golden lancehead).